Reading from the N-terminus, the 550-residue chain is MKSKSIIAQLLYVLIAFMAVSCVADKSEPCPSGEPTRVSGSIVSLEHHGLRGASADKENSVERLELWVFDEDGHFLERAVADLSGSTFTAKIIPSEVERRIHFIANYELADPSVWVGRSEREMLPSISVADDLETIRMWARISYPSIAPNQNLGQIQLLRNMAKFSLSVTPPAESKLYDASYALYNSWNKGTLAPFDPNTGSFPQGQITEPAGVVFANPTSEAAFKEADGAHFFYGFERDQSNIGTGAGITCLILKARYNLPNADYTYYKLDFVDTNKVRYNITRNHFYKMILKKAKAPGRPTLQEALDGAAANNIFLSAEVQALPAFSDGSGMLTVDHTYMVFVQGEPSGTFQATYIPQGQNNPDYSKLTVSVSTPTGQQAAVTSAQHEGNGKIKLTLAQQENLTKRSDVVIGVQGNPDLKRSVTVLVREKYQYVFFKANTSSAENNQVTTQISAGQGNELLISAKLPDVLNAALLPITFKVYTEHFYPKTGGMILGIEGGKTLYKYVLTTMPQNKELQFRFKSNKVNSAENIAVKMDYFHDQTIHVTN.

A signal peptide spans 1–21 (MKSKSIIAQLLYVLIAFMAVS). Cys-22 is lipidated: N-palmitoyl cysteine. A lipid anchor (S-diacylglycerol cysteine) is attached at Cys-22. Residues 22-51 (CVADKSEPCPSGEPTRVSGSIVSLEHHGLR) constitute a propeptide that is removed on maturation.

It belongs to the FimE family. As to quaternary structure, fimbriae are composed of a major, structural subunit and the minor components FimC, FimD and FimE. Identified in a complex composed of FimC, FimD and FimE (in vitro). Does not directly interact with host proteins, but only as a complex with FimC and FimD.

The protein resides in the fimbrium. It localises to the cell outer membrane. Its function is as follows. Probably a component of the fimbrium tip; required for incorporation of FimC and FimD into fimbriae. These long, filamentous pili are attached to the cell surface; they mediate biofilm formation, adhesion onto host cells and onto other bacteria that are part of the oral microbiome. They play an important role in invasion of periodontal tissues and are major virulence factors. FimC, FimD and FimE contribute to interaction with host CXCR4 and thereby down-regulate the TLR2-mediated host immune response. This is Major fimbrium tip subunit FimE from Porphyromonas gingivalis (strain ATCC 33277 / DSM 20709 / CIP 103683 / JCM 12257 / NCTC 11834 / 2561).